Here is a 192-residue protein sequence, read N- to C-terminus: Adenylate kinase (192 aa).

10–18 is an ATP binding site; it reads GVPGVGSTT.

It belongs to the archaeal adenylate kinase family. As to quaternary structure, monomer.

It is found in the cytoplasm. It catalyses the reaction AMP + ATP = 2 ADP. This Methanococcus voltae protein is Adenylate kinase (adkA).